The following is a 338-amino-acid chain: Cytosolic sulfotransferase 16 (338 aa).

Residue 81–86 (KTGTTW) participates in 3'-phosphoadenylyl sulfate binding. Histidine 143 acts as the Proton acceptor in catalysis. 3'-phosphoadenylyl sulfate is bound by residues arginine 165, serine 173, tyrosine 231, and 301-303 (RKG).

Belongs to the sulfotransferase 1 family. In terms of tissue distribution, highly expressed in roots, stems and mature leaves. Low expression in young leaves and flowers. Barely detected in siliques.

It is found in the cytoplasm. The catalysed reaction is (Z)-desulfoglucotropeolin + 3'-phosphoadenylyl sulfate = (Z)-glucotropeolin + adenosine 3',5'-bisphosphate + H(+). The enzyme catalyses (Z)-indolylmethyl desulfoglucosinolate + 3'-phosphoadenylyl sulfate = (Z)-glucobrassicin + adenosine 3',5'-bisphosphate + H(+). Inhibited by phosphoadenosine 5'-phosphate (PAP). In terms of biological role, sulfotransferase that utilizes 3'-phospho-5'-adenylyl sulfate (PAPS) as sulfonate donor to catalyze the sulfate conjugation of desulfo-glucosinolates (dsGSs), the final step in the biosynthesis of the glucosinolate core structure. Substrate preference is desulfo-2-phenylethyl glucosinolate &gt; desulfo-indol-3-yl methyl glucosinolate &gt; desulfo-benzyl glucosinolate &gt; desulfo-6-methylthiohexyl glucosinolate &gt; desulfo-4-methylthiobutyl glucosinolate &gt; desulfo-3-methylthiopropyl glucosinolate &gt; desulfo-singrin &gt; desulfo-3-butenyl glucosinolate. The chain is Cytosolic sulfotransferase 16 (SOT16) from Arabidopsis thaliana (Mouse-ear cress).